We begin with the raw amino-acid sequence, 125 residues long: MKTAATIALFCAGGGLTRYYLSGWIYGLLGRAFPYGTLVVNIIGAYCIGLIMELGLRSTMLSDTLRIGLTVGFMGGLTTFSTFSYETFKLLEDGQFVMAFTNVLASVAVCLLCTWLGIITVRSLA.

A run of 4 helical transmembrane segments spans residues 9 to 29 (LFCA…YGLL), 32 to 52 (AFPY…GLIM), 67 to 87 (IGLT…SYET), and 99 to 119 (AFTN…LGII). 2 residues coordinate Na(+): Gly75 and Thr78.

Belongs to the fluoride channel Fluc/FEX (TC 1.A.43) family.

It localises to the cell inner membrane. It carries out the reaction fluoride(in) = fluoride(out). Its activity is regulated as follows. Na(+) is not transported, but it plays an essential structural role and its presence is essential for fluoride channel function. Functionally, fluoride-specific ion channel. Important for reducing fluoride concentration in the cell, thus reducing its toxicity. The chain is Fluoride-specific ion channel FluC from Trichlorobacter lovleyi (strain ATCC BAA-1151 / DSM 17278 / SZ) (Geobacter lovleyi).